We begin with the raw amino-acid sequence, 306 residues long: Curved DNA-binding protein (306 aa).

The J domain maps to 5–69; the sequence is DYYAIMGVKP…QRRAEYDQMW (65 aa).

The protein localises to the cytoplasm. Its subcellular location is the nucleoid. Its function is as follows. DNA-binding protein that preferentially recognizes a curved DNA sequence. It is probably a functional analog of DnaJ; displays overlapping activities with DnaJ, but functions under different conditions, probably acting as a molecular chaperone in an adaptive response to environmental stresses other than heat shock. Lacks autonomous chaperone activity; binds native substrates and targets them for recognition by DnaK. Its activity is inhibited by the binding of CbpM. The polypeptide is Curved DNA-binding protein (Escherichia fergusonii (strain ATCC 35469 / DSM 13698 / CCUG 18766 / IAM 14443 / JCM 21226 / LMG 7866 / NBRC 102419 / NCTC 12128 / CDC 0568-73)).